The primary structure comprises 802 residues: DNA mismatch repair protein MutS (802 aa).

617–624 is a binding site for ATP; it reads GPNMGGKS.

Belongs to the DNA mismatch repair MutS family.

In terms of biological role, this protein is involved in the repair of mismatches in DNA. It is possible that it carries out the mismatch recognition step. This protein has a weak ATPase activity. In Buchnera aphidicola subsp. Acyrthosiphon pisum (strain Tuc7), this protein is DNA mismatch repair protein MutS.